The chain runs to 139 residues: NADH-quinone oxidoreductase subunit A (139 aa).

3 helical membrane passes run 16–36, 69–89, and 94–114; these read GLFI…ASLL, LVAM…AWAV, and VGWE…AGLV.

It belongs to the complex I subunit 3 family. NDH-1 is composed of 14 different subunits. Subunits NuoA, H, J, K, L, M, N constitute the membrane sector of the complex.

The protein resides in the cell inner membrane. It carries out the reaction a quinone + NADH + 5 H(+)(in) = a quinol + NAD(+) + 4 H(+)(out). Its function is as follows. NDH-1 shuttles electrons from NADH, via FMN and iron-sulfur (Fe-S) centers, to quinones in the respiratory chain. The immediate electron acceptor for the enzyme in this species is believed to be ubiquinone. Couples the redox reaction to proton translocation (for every two electrons transferred, four hydrogen ions are translocated across the cytoplasmic membrane), and thus conserves the redox energy in a proton gradient. In Chromohalobacter salexigens (strain ATCC BAA-138 / DSM 3043 / CIP 106854 / NCIMB 13768 / 1H11), this protein is NADH-quinone oxidoreductase subunit A.